The following is a 274-amino-acid chain: Sulfur carrier protein FdhD (274 aa).

The active-site Cysteine persulfide intermediate is C121. A Mo-bis(molybdopterin guanine dinucleotide)-binding site is contributed by 258 to 263 (FSKPGR).

Belongs to the FdhD family.

The protein resides in the cytoplasm. In terms of biological role, required for formate dehydrogenase (FDH) activity. Acts as a sulfur carrier protein that transfers sulfur from IscS to the molybdenum cofactor prior to its insertion into FDH. This chain is Sulfur carrier protein FdhD, found in Yersinia pestis bv. Antiqua (strain Antiqua).